A 561-amino-acid chain; its full sequence is Asparagine synthetase [glutamine-hydrolyzing] (561 aa).

The For GATase activity role is filled by Cys-2. The 190-residue stretch at Cys-2–Lys-191 folds into the Glutamine amidotransferase type-2 domain. L-glutamine is bound by residues Arg-49–Val-53, Asn-75–Glu-77, and Asp-97. The 324-residue stretch at His-213–Tyr-536 folds into the Asparagine synthetase domain. Residues Leu-256, Ile-288, and Ser-363 to Gly-364 each bind ATP. At Lys-385 the chain carries N6-acetyllysine. Thr-545 carries the post-translational modification Phosphothreonine. Position 557 is a phosphoserine (Ser-557).

The enzyme catalyses L-aspartate + L-glutamine + ATP + H2O = L-asparagine + L-glutamate + AMP + diphosphate + H(+). It functions in the pathway amino-acid biosynthesis; L-asparagine biosynthesis; L-asparagine from L-aspartate (L-Gln route): step 1/1. The sequence is that of Asparagine synthetase [glutamine-hydrolyzing] (ASNS) from Cricetulus griseus (Chinese hamster).